A 329-amino-acid polypeptide reads, in one-letter code: Malate dehydrogenase (329 aa).

Position 12–18 (12–18) interacts with NAD(+); the sequence is GAAGQIG. Substrate-binding residues include Arg95 and Arg101. NAD(+) is bound by residues Asn108, Gln115, and 132-134; that span reads VGN. Residues Asn134 and Arg165 each contribute to the substrate site. His190 acts as the Proton acceptor in catalysis.

Belongs to the LDH/MDH superfamily. MDH type 2 family.

The catalysed reaction is (S)-malate + NAD(+) = oxaloacetate + NADH + H(+). In terms of biological role, catalyzes the reversible oxidation of malate to oxaloacetate. The polypeptide is Malate dehydrogenase (Polynucleobacter asymbioticus (strain DSM 18221 / CIP 109841 / QLW-P1DMWA-1) (Polynucleobacter necessarius subsp. asymbioticus)).